We begin with the raw amino-acid sequence, 142 residues long: Large ribosomal subunit protein uL11 (142 aa).

This sequence belongs to the universal ribosomal protein uL11 family. In terms of assembly, part of the ribosomal stalk of the 50S ribosomal subunit. Interacts with L10 and the large rRNA to form the base of the stalk. L10 forms an elongated spine to which L12 dimers bind in a sequential fashion forming a multimeric L10(L12)X complex. In terms of processing, one or more lysine residues are methylated.

In terms of biological role, forms part of the ribosomal stalk which helps the ribosome interact with GTP-bound translation factors. In Erwinia tasmaniensis (strain DSM 17950 / CFBP 7177 / CIP 109463 / NCPPB 4357 / Et1/99), this protein is Large ribosomal subunit protein uL11.